We begin with the raw amino-acid sequence, 201 residues long: Small ribosomal subunit protein uS10m (201 aa).

Belongs to the universal ribosomal protein uS10 family. As to quaternary structure, component of the mitochondrial small ribosomal subunit (mt-SSU). Mature mammalian 55S mitochondrial ribosomes consist of a small (28S) and a large (39S) subunit. The 28S small subunit contains a 12S ribosomal RNA (12S mt-rRNA) and 30 different proteins. The 39S large subunit contains a 16S rRNA (16S mt-rRNA), a copy of mitochondrial valine transfer RNA (mt-tRNA(Val)), which plays an integral structural role, and 52 different proteins.

Its subcellular location is the mitochondrion. The chain is Small ribosomal subunit protein uS10m (MRPS10) from Homo sapiens (Human).